Consider the following 183-residue polypeptide: Intermembrane phospholipid transport system binding protein MlaD (183 aa).

Topologically, residues 1–7 (MQTKKNE) are cytoplasmic. Residues 8 to 28 (IWVGIFLLAALLAALFVCLKA) form a helical; Signal-anchor for type II membrane protein membrane-spanning segment. The Periplasmic segment spans residues 29–183 (ANVTSIRTEP…ETTEPVGTTK (155 aa)). The MCE/MlaD stretch occupies residues 39 to 116 (TYTLYATFDN…LGEQYLALNV (78 aa)). Positions 155–183 (KGDDNKNSGDAPAAAPGNNETTEPVGTTK) are disordered. Residues 172 to 183 (NNETTEPVGTTK) are compositionally biased toward polar residues.

It belongs to the MlaD family. In terms of assembly, the complex is composed of two ATP-binding proteins (MlaF), two transmembrane proteins (MlaE), two cytoplasmic solute-binding proteins (MlaB) and six periplasmic solute-binding proteins (MlaD).

It localises to the cell inner membrane. Part of the ABC transporter complex MlaFEDB, which is involved in a phospholipid transport pathway that maintains lipid asymmetry in the outer membrane by retrograde trafficking of phospholipids from the outer membrane to the inner membrane. MlaD functions in substrate binding with strong affinity for phospholipids and modulates ATP hydrolytic activity of the complex. The sequence is that of Intermembrane phospholipid transport system binding protein MlaD from Escherichia coli O157:H7.